A 132-amino-acid chain; its full sequence is Small ribosomal subunit protein uS8 (132 aa).

It belongs to the universal ribosomal protein uS8 family. In terms of assembly, part of the 30S ribosomal subunit. Contacts proteins S5 and S12.

One of the primary rRNA binding proteins, it binds directly to 16S rRNA central domain where it helps coordinate assembly of the platform of the 30S subunit. The protein is Small ribosomal subunit protein uS8 of Enterococcus faecalis (strain ATCC 700802 / V583).